The primary structure comprises 316 residues: SHC-transforming protein homolog 1 (316 aa).

Positions 16 to 158 (GVSLSATYLG…LIDVLTTAIN (143 aa)) constitute a PID domain. The SH2 domain occupies 211–307 (WYHGNLSRED…ETSLNLIRPV (97 aa)). The segment at 292 to 316 (SEGRDRETSLNLIRPVPCPGSDDIE) is disordered.

As to quaternary structure, interacts (via PID domain) with daf-2 (via cytoplasmic domain). Interacts with mek-1; the interaction is independent of mek-1 catalytic activity and is constitutive. Interacts (via N-terminus) with mlk-1 (via NPQY motif when phosphorylated on tyrosine residue). Does not interact with jkk-1 or sek-1. Interacts (via SH2 domain) with svh-2. Interacts with svh-4. In terms of tissue distribution, expressed in hypodermis, intestine, head and tail neurons, pharynx, gonads, vulva and body muscles.

It localises to the cytoplasm. The protein localises to the nucleus. The protein resides in the cell membrane. Scaffold protein which plays an important role in the activation of the JNK pathway composed of mlk-1, mek-1 and kgb-1; by bringing together mek-1 and mlk-1, promotes mlk-1-mediated phosphorylation and activation of mek-1 which in turn phosphorylates kgb-1. In addition, negatively modulates the activation of the insulin/IGF-1-like signaling (IIS) probably by inhibiting the insulin receptor daf-2. Positively regulates the activity of the transcription factor daf-16/FOXO by both inhibiting IIS and activating the JNK pathway. Plays a role in maintaining gonadal basement membrane integrity through activation of the JNK pathway components mek-1 and jnk-1. Involved in the response to several environmental stresses including heavy metal ions (Cu(2+) and Cd(2+)), heat, oxidative and protein misfolding (ER) stresses. Plays a role in gonad and germline development following the L1 diapause. Plays a role in life span and egg laying. Plays a role in axon regeneration after injury. The chain is SHC-transforming protein homolog 1 from Caenorhabditis elegans.